The sequence spans 155 residues: Ribosomal RNA large subunit methyltransferase H (155 aa).

Residues Leu72, Gly103, and 122–127 (LSTLTL) each bind S-adenosyl-L-methionine.

This sequence belongs to the RNA methyltransferase RlmH family. As to quaternary structure, homodimer.

It is found in the cytoplasm. The catalysed reaction is pseudouridine(1915) in 23S rRNA + S-adenosyl-L-methionine = N(3)-methylpseudouridine(1915) in 23S rRNA + S-adenosyl-L-homocysteine + H(+). Its function is as follows. Specifically methylates the pseudouridine at position 1915 (m3Psi1915) in 23S rRNA. The chain is Ribosomal RNA large subunit methyltransferase H from Klebsiella pneumoniae (strain 342).